The sequence spans 513 residues: Coniferin beta-glucosidase (513 aa).

A signal peptide spans 1–23 (MEVSVLMWVLLFYSLLGFQVTTA). Residues Gln-44, His-145, and 190–191 (NE) contribute to the a beta-D-glucoside site. Glu-191 functions as the Proton donor in the catalytic mechanism. Cys-210 and Cys-219 form a disulfide bridge. N-linked (GlcNAc...) asparagine glycosylation is present at Asn-223. A beta-D-glucoside is bound by residues Tyr-336 and Glu-408. Glu-408 acts as the Nucleophile in catalysis. Asn-447 is a glycosylation site (N-linked (GlcNAc...) asparagine). A beta-D-glucoside is bound by residues Trp-457, 464–465 (EW), and Phe-473.

The protein belongs to the glycosyl hydrolase 1 family. As to quaternary structure, homodimer. Glycosylated.

The enzyme catalyses 4-O-(beta-D-glucosyl)-(E)-coniferol + H2O = (E)-coniferol + D-glucose. With respect to regulation, inhibited by glucono-1,5-lactone, but not by bromoconduritol or conduritol B epoxide. Functionally, involved in the release of monolignols for lignin biosynthesis. Unable to hydrolyze 4-nitrophenyl beta-cellobioside or alpha-linked methylumbelliferyl glucoside. The sequence is that of Coniferin beta-glucosidase from Pinus contorta (Shore pine).